A 62-amino-acid chain; its full sequence is Small ribosomal subunit protein uS14 (62 aa).

The Zn(2+) site is built by Cys25, Cys28, Cys41, and Cys44.

Belongs to the universal ribosomal protein uS14 family. Zinc-binding uS14 subfamily. In terms of assembly, part of the 30S ribosomal subunit. Contacts proteins S3 and S10. Requires Zn(2+) as cofactor.

In terms of biological role, binds 16S rRNA, required for the assembly of 30S particles and may also be responsible for determining the conformation of the 16S rRNA at the A site. This is Small ribosomal subunit protein uS14 from Hydrogenobaculum sp. (strain Y04AAS1).